The primary structure comprises 386 residues: O-methyltransferase 10 (386 aa).

S-adenosyl-L-homocysteine is bound by residues Ser207, Gly231, Asp254, Asp274, and Lys288. An S-adenosyl-L-methionine-binding site is contributed by Asp254. His292 (proton acceptor) is an active-site residue.

Belongs to the class I-like SAM-binding methyltransferase superfamily. Cation-independent O-methyltransferase family. Homodimer.

It catalyses the reaction dopamine + S-adenosyl-L-methionine = 4-methoxytyramine + S-adenosyl-L-homocysteine + H(+). The catalysed reaction is 3,4-dihydroxy-5-methoxyphenethylamine + S-adenosyl-L-methionine = 3-hydroxy-4,5-dimethoxyphenethylamine + S-adenosyl-L-homocysteine + H(+). It carries out the reaction 3-hydroxy-4,5-dimethoxyphenethylamine + S-adenosyl-L-methionine = mescaline + S-adenosyl-L-homocysteine + H(+). The enzyme catalyses 4-hydroxy-3,5-dimethoxyphenethylamine + S-adenosyl-L-methionine = mescaline + S-adenosyl-L-homocysteine + H(+). It participates in aromatic compound metabolism. It functions in the pathway alkaloid biosynthesis. In terms of biological role, O-methyltransferase participating in the biosynthesis of natural products derived from phenylethylamine, including mescaline, a natural hallucinogen potentially used in psychotherapeutic treatments. Catalyzes the O-methylation of mescaline para hydroxyl groups, using dopamine, 3,4-dihydroxy-5-methoxyphenethylamine, 3-hydroxy-4,5-dimethoxyphenethylamine and 4-hydroxy-3,5-dimethoxyphenethylamine as substrates. The chain is O-methyltransferase 10 from Lophophora williamsii (Peyote).